The sequence spans 257 residues: Glucose-1-phosphate cytidylyltransferase (257 aa).

Substrate contacts are provided by residues 6 to 10, 11 to 13, lysine 23, serine 104, arginine 109, and glycine 128; these read LAGGL and GTR. Residues aspartate 129 and aspartate 234 each coordinate Mg(2+).

The protein belongs to the glucose-1-phosphate cytidylyltransferase family. As to quaternary structure, homohexamer. It depends on Mg(2+) as a cofactor.

The catalysed reaction is alpha-D-glucose 1-phosphate + CTP + H(+) = CDP-D-glucose + diphosphate. It participates in nucleotide-sugar biosynthesis; CDP-3,6-dideoxy-D-mannose biosynthesis; CDP-3,6-dideoxy-D-mannose from CTP and alpha-D-glucose 1-phosphate: step 1/5. The protein operates within bacterial outer membrane biogenesis; LPS O-antigen biosynthesis. In terms of biological role, involved in the biosynthesis of the tyvelose, a 3,6-dideoxyhexose found in the O-antigen of the surface lipopolysaccharides. It catalyzes the transfer of a CMP moiety from CTP to glucose 1-phosphate. This enzyme can utilize either CTP or UTP as the nucleotide donor. The polypeptide is Glucose-1-phosphate cytidylyltransferase (rfbF) (Salmonella typhi).